The primary structure comprises 249 residues: Fasciclin-like arabinogalactan protein 12 (249 aa).

An N-terminal signal peptide occupies residues 1 to 24 (MEHSLIILLFTVLLLLTTTPGILS). The region spanning 37–181 (PTNVTKILEK…LAVYQVDKVL (145 aa)) is the FAS1 domain. 5 N-linked (GlcNAc...) asparagine glycosylation sites follow: N39, N71, N143, N152, and N159. A disordered region spans residues 186–219 (VFDPRPPAPAPAPSVSKSKKKKDDSDSSSDDSPA). Residue D220 is the site of GPI-anchor amidated aspartate attachment. Residues 221–249 (ASFALRNVGSVCDAVSFCVMSVMLAWFYL) constitute a propeptide, removed in mature form.

The protein belongs to the fasciclin-like AGP family.

The protein resides in the cell membrane. May be a cell surface adhesion protein. The chain is Fasciclin-like arabinogalactan protein 12 (FLA12) from Arabidopsis thaliana (Mouse-ear cress).